We begin with the raw amino-acid sequence, 278 residues long: Protein saf1 (278 aa).

3 disordered regions span residues 1-43 (MLSK…RNMS), 81-210 (KKNI…DIEE), and 240-264 (QKLA…EDKD). 2 stretches are compositionally biased toward basic and acidic residues: residues 22–38 (QIKV…ERLS) and 90–103 (GRVE…AERQ). 2 stretches are compositionally biased toward basic residues: residues 104–116 (HKPR…KNPK) and 169–183 (REKK…HHKK). Over residues 186–202 (INASSAQPKSTTTTEAA) the composition is skewed to polar residues.

It localises to the nucleus. It is found in the nucleolus. In Schizosaccharomyces pombe (strain 972 / ATCC 24843) (Fission yeast), this protein is Protein saf1 (saf1).